We begin with the raw amino-acid sequence, 90 residues long: Small ribosomal subunit protein bS18 (90 aa).

Over residues 1 to 14 (MARDNGNKDRDGKR) the composition is skewed to basic and acidic residues. Residues 1-23 (MARDNGNKDRDGKRPNGGRNRKM) are disordered.

It belongs to the bacterial ribosomal protein bS18 family. Part of the 30S ribosomal subunit. Forms a tight heterodimer with protein bS6.

Its function is as follows. Binds as a heterodimer with protein bS6 to the central domain of the 16S rRNA, where it helps stabilize the platform of the 30S subunit. This chain is Small ribosomal subunit protein bS18, found in Clostridium acetobutylicum (strain ATCC 824 / DSM 792 / JCM 1419 / IAM 19013 / LMG 5710 / NBRC 13948 / NRRL B-527 / VKM B-1787 / 2291 / W).